The chain runs to 332 residues: tRNA-dihydrouridine synthase B (332 aa).

Residues 16-18 (PMA) and Q70 contribute to the FMN site. C100 functions as the Proton donor in the catalytic mechanism. FMN is bound by residues K139, 200-202 (NGD), and 224-225 (GR).

It belongs to the Dus family. DusB subfamily. It depends on FMN as a cofactor.

It carries out the reaction a 5,6-dihydrouridine in tRNA + NAD(+) = a uridine in tRNA + NADH + H(+). The enzyme catalyses a 5,6-dihydrouridine in tRNA + NADP(+) = a uridine in tRNA + NADPH + H(+). In terms of biological role, catalyzes the synthesis of 5,6-dihydrouridine (D), a modified base found in the D-loop of most tRNAs, via the reduction of the C5-C6 double bond in target uridines. The sequence is that of tRNA-dihydrouridine synthase B from Pasteurella multocida (strain Pm70).